Reading from the N-terminus, the 420-residue chain is Phosphoribosylamine--glycine ligase (420 aa).

In terms of domain architecture, ATP-grasp spans 108–314 (KQIMVKYGIP…FAQNIDDILH (207 aa)). 134-195 (IEEQGAPIVV…EEFLAGEEFS (62 aa)) lines the ATP pocket. Residues E284 and N286 each contribute to the Mg(2+) site.

It belongs to the GARS family. Mg(2+) serves as cofactor. Mn(2+) is required as a cofactor.

It catalyses the reaction 5-phospho-beta-D-ribosylamine + glycine + ATP = N(1)-(5-phospho-beta-D-ribosyl)glycinamide + ADP + phosphate + H(+). It participates in purine metabolism; IMP biosynthesis via de novo pathway; N(1)-(5-phospho-D-ribosyl)glycinamide from 5-phospho-alpha-D-ribose 1-diphosphate: step 2/2. This is Phosphoribosylamine--glycine ligase from Streptococcus suis.